We begin with the raw amino-acid sequence, 571 residues long: Zinc metalloproteinase-disintegrin-like jararhagin (571 aa).

A propeptide spanning residues 1–150 (ATRPKGAVQP…KKASQLAFTA (150 aa)) is cleaved from the precursor. Position 151 is a pyrrolidone carboxylic acid (Glu) (E151). The Peptidase M12B domain maps to 159–355 (KYIEFFVVVD…HNPECIINEP (197 aa)). E162 and D246 together coordinate Ca(2+). Intrachain disulfides connect C270-C350, C310-C334, and C312-C317. H295 is a binding site for Zn(2+). The active site involves E296. H299 and H305 together coordinate Zn(2+). N333 carries N-linked (GlcNAc...) asparagine glycosylation. Residues C350, N353, V365, N368, L370, E372, E375, and D378 each contribute to the Ca(2+) site. The 87-residue stretch at 363–449 (PPVCGNELLE…ECPADVFHKN (87 aa)) folds into the Disintegrin domain. 22 cysteine pairs are disulfide-bonded: C366/C385, C366/C395, C377/C390, C377/C395, C379/C385, C389/C412, C403/C409, C408/C434, C421/C441, C428/C453, C428/C460, C453/C465, C460/C465, C472/C487, C472/C522, C487/C533, C500/C510, C510/C517, C517/C559, C522/C533, C553/C564, and C559/C564. The D/ECD-tripeptide signature appears at 427-429 (ECD). Ca(2+) contacts are provided by D429, P430, E432, D444, and V445.

It belongs to the venom metalloproteinase (M12B) family. P-III subfamily. P-IIIb sub-subfamily. In terms of assembly, monomer (Jararhagin and Jararhagin-C) and dimer (Jaracetin). It depends on Zn(2+) as a cofactor. The N-terminus of Jararhagin is blocked. As to expression, expressed by the venom gland.

It localises to the secreted. The catalysed reaction is Cleavage of 10-His-|-Leu-11, 14-Ala-|-Leu-15, 16-Tyr-|-Leu-17 and 24-Phe-|-Phe-25 bonds in insulin B chain.. Its activity is regulated as follows. Inhibited by EDTA, 1,10 phenanthroline and batimastat (a peptidomimetic MMP inhibitor). In terms of biological role, snake venom zinc metalloproteinase-disintegrin-like jararhagin: causes hemorrhage. This is the result of the degradation of sub-endothelial matrix proteins leading to the disruption of the blood vessel endothelium, with accompanying disturbances in platelet function. It is able to degrade von Willebrand factor (vWF) and it hydrolyzes the alpha-chain of fibrinogen (FGA) while leaving the beta and gamma chains unaffected. It inhibits collagen-induced platelet aggregation through the binding to alpha-2/beta-1 integrin (ITGA2/ITGB1) (collagen receptor), and it cleaves the beta-1 subunit of the same integrin, inhibiting platelet interaction and ultimately causing impairment of signal transduction. It has inability to be affected by the plasma inhibitor alpha(2)-macroglobulin. In fibroblasts, it functions as a collagen-mimetic substrate and, in endothelial cells, it causes apoptosis and indirectly inhibits cell proliferation by release of angiostatin-like compounds. It induces a strong pro-inflammatory response characterized by intense leukocyte accumulation and release of cytokines at the site of the injection. Although hemorrhage and edema are a response to the direct effect of this toxin, jararhagin-induced inflammation and necrosis are dependent on macrophages and key pro-inflammatory cytokines or their receptors. It also possesses anti-tumorgenic properties. Functionally, the monomeric form inhibits collagen- and ADP-induced platelet aggregation, but has no effect on glycoprotein Ib-IX-dependent (GP1BA/GP5/GP9) platelet agglutination. Locally activates the early events of an acute inflammatory response as leukocyte rolling and pro-inflammatory cytokine release. The dimeric form jaracetin may be a dimeric form of jararhagin-C. It binds to von Willebrand factor (VWF) and induces its interaction with GPIbalpha (GP1BA) (via the vWF A1 domain), resulting in platelet aggregation. Also binds the alpha-2 subunit of the alpha-2/beta-1 (ITGA2/ITGB1) integrin. It potently induces platelet aggregation in citrated platelet-rich plasma. In Bothrops jararaca (Jararaca), this protein is Zinc metalloproteinase-disintegrin-like jararhagin.